A 350-amino-acid polypeptide reads, in one-letter code: Glyoxylate reductase 1 (350 aa).

T31 is modified (phosphothreonine). Residues 173–174 (RI), 252–254 (TAR), and D278 each bind NAD(+). R254 is a catalytic residue. Residue E283 is part of the active site. The active-site Proton donor is H301. Position 301-304 (301-304 (HMGT)) interacts with NAD(+).

The protein belongs to the D-isomer specific 2-hydroxyacid dehydrogenase family.

It is found in the cytoplasm. Its subcellular location is the nucleus. The protein resides in the mitochondrion. It catalyses the reaction glycolate + NAD(+) = glyoxylate + NADH + H(+). It carries out the reaction glycolate + NADP(+) = glyoxylate + NADPH + H(+). The enzyme catalyses (R)-glycerate + NAD(+) = 3-hydroxypyruvate + NADH + H(+). The catalysed reaction is (R)-glycerate + NADP(+) = 3-hydroxypyruvate + NADPH + H(+). In terms of biological role, glyoxylate reductase that reversibly reduces glyoxylate to glycolate, or alternatively hydroxypyruvate to D-glycerate, using either NADPH or NADH as a cosubstrate. Does not act as a hydroxyisocaproate dehydrogenase even though it also has minor activity on alpha-ketoisocaproate. The polypeptide is Glyoxylate reductase 1 (Saccharomyces cerevisiae (strain ATCC 204508 / S288c) (Baker's yeast)).